The sequence spans 353 residues: Protein RecA (353 aa).

ATP is bound at residue 67 to 74; that stretch reads GPESSGKT.

This sequence belongs to the RecA family.

The protein localises to the cytoplasm. Can catalyze the hydrolysis of ATP in the presence of single-stranded DNA, the ATP-dependent uptake of single-stranded DNA by duplex DNA, and the ATP-dependent hybridization of homologous single-stranded DNAs. It interacts with LexA causing its activation and leading to its autocatalytic cleavage. The chain is Protein RecA from Salmonella paratyphi A (strain ATCC 9150 / SARB42).